The following is a 146-amino-acid chain: Extracellular globin-2A (146 aa).

The 143-residue stretch at 4–146 (HCGPLQRLKV…EVIYPGIKHD (143 aa)) folds into the Globin domain. Cys-5 and Cys-134 form a disulfide bridge. A heme b-binding site is contributed by His-97.

It belongs to the globin family. In terms of assembly, disulfide bonded trimer of chains IIA, IIB, and IIC.

This chain is Extracellular globin-2A, found in Tylorrhynchus heterochetus (Japanese palolo worm).